We begin with the raw amino-acid sequence, 344 residues long: MEETPQHCLSRLPDNSALKQQELPAHRLYFTARRVLFVFFTTGIFCLCMGIILILSARSTQEIEINYTRICANCAKLRENASNFDKECTCSIPFYLSGKMMGNVYMYYKLYGFYQNLYRYVRSRSNRQLVGKDVKAVEDCAPFKMSDNKTPIVPCGAIANSMFNDTIILSHNINSSVQIKVPMLKSGLTWWTDKYVKFQNPSSKNLADEFRGTTKPPNWPKPIYDLDKKDPRNNGFLNDDFIVWMRAAAFPTFKKLYGRLNRTHHFIEGLPAGNYSFNITYNFPVTRFQGEKSVVLSTLTWCGGNSLFLGLAYTVTGAITWLASFTMMAIHITLKNKQMSFFHQ.

At 1–34 the chain is on the cytoplasmic side; sequence MEETPQHCLSRLPDNSALKQQELPAHRLYFTARR. A helical membrane pass occupies residues 35 to 55; it reads VLFVFFTTGIFCLCMGIILIL. Topologically, residues 56–306 are extracellular; sequence SARSTQEIEI…STLTWCGGNS (251 aa). Residues Asn66 and Asn261 are each glycosylated (N-linked (GlcNAc...) asparagine). Residues 307-327 traverse the membrane as a helical segment; the sequence is LFLGLAYTVTGAITWLASFTM. The Cytoplasmic portion of the chain corresponds to 328 to 344; it reads MAIHITLKNKQMSFFHQ.

It belongs to the CDC50/LEM3 family. As to expression, specifically expressed in testis.

It localises to the membrane. The polypeptide is Cell cycle control protein 50C (TMEM30C) (Macaca fascicularis (Crab-eating macaque)).